The primary structure comprises 364 residues: NAD(P)H-quinone oxidoreductase subunit 1, chloroplastic (364 aa).

6 helical membrane passes run isoleucine 27 to isoleucine 47, phenylalanine 98 to phenylalanine 118, isoleucine 127 to methionine 147, glycine 255 to leucine 275, valine 301 to valine 321, and leucine 337 to threonine 357.

The protein belongs to the complex I subunit 1 family. As to quaternary structure, NDH is composed of at least 16 different subunits, 5 of which are encoded in the nucleus.

It is found in the plastid. The protein resides in the chloroplast thylakoid membrane. The enzyme catalyses a plastoquinone + NADH + (n+1) H(+)(in) = a plastoquinol + NAD(+) + n H(+)(out). It carries out the reaction a plastoquinone + NADPH + (n+1) H(+)(in) = a plastoquinol + NADP(+) + n H(+)(out). In terms of biological role, NDH shuttles electrons from NAD(P)H:plastoquinone, via FMN and iron-sulfur (Fe-S) centers, to quinones in the photosynthetic chain and possibly in a chloroplast respiratory chain. The immediate electron acceptor for the enzyme in this species is believed to be plastoquinone. Couples the redox reaction to proton translocation, and thus conserves the redox energy in a proton gradient. The protein is NAD(P)H-quinone oxidoreductase subunit 1, chloroplastic of Illicium oligandrum (Star anise).